A 101-amino-acid polypeptide reads, in one-letter code: Aspartyl/glutamyl-tRNA(Asn/Gln) amidotransferase subunit C (101 aa).

The segment at 75–101 is disordered; sequence QEALSGAPDAEEQRFRVPRILDEDVAS. Positions 85–101 are enriched in basic and acidic residues; that stretch reads EEQRFRVPRILDEDVAS.

This sequence belongs to the GatC family. Heterotrimer of A, B and C subunits.

The enzyme catalyses L-glutamyl-tRNA(Gln) + L-glutamine + ATP + H2O = L-glutaminyl-tRNA(Gln) + L-glutamate + ADP + phosphate + H(+). The catalysed reaction is L-aspartyl-tRNA(Asn) + L-glutamine + ATP + H2O = L-asparaginyl-tRNA(Asn) + L-glutamate + ADP + phosphate + 2 H(+). In terms of biological role, allows the formation of correctly charged Asn-tRNA(Asn) or Gln-tRNA(Gln) through the transamidation of misacylated Asp-tRNA(Asn) or Glu-tRNA(Gln) in organisms which lack either or both of asparaginyl-tRNA or glutaminyl-tRNA synthetases. The reaction takes place in the presence of glutamine and ATP through an activated phospho-Asp-tRNA(Asn) or phospho-Glu-tRNA(Gln). In Salinispora arenicola (strain CNS-205), this protein is Aspartyl/glutamyl-tRNA(Asn/Gln) amidotransferase subunit C.